The primary structure comprises 154 residues: 6,7-dimethyl-8-ribityllumazine synthase (154 aa).

5-amino-6-(D-ribitylamino)uracil contacts are provided by residues Phe-26, 60–62 (ALE), and 84–86 (CII). 89-90 (ET) serves as a coordination point for (2S)-2-hydroxy-3-oxobutyl phosphate. His-92 (proton donor) is an active-site residue. Position 117 (Asn-117) interacts with 5-amino-6-(D-ribitylamino)uracil. Arg-131 contributes to the (2S)-2-hydroxy-3-oxobutyl phosphate binding site.

This sequence belongs to the DMRL synthase family.

It carries out the reaction (2S)-2-hydroxy-3-oxobutyl phosphate + 5-amino-6-(D-ribitylamino)uracil = 6,7-dimethyl-8-(1-D-ribityl)lumazine + phosphate + 2 H2O + H(+). Its pathway is cofactor biosynthesis; riboflavin biosynthesis; riboflavin from 2-hydroxy-3-oxobutyl phosphate and 5-amino-6-(D-ribitylamino)uracil: step 1/2. Its function is as follows. Catalyzes the formation of 6,7-dimethyl-8-ribityllumazine by condensation of 5-amino-6-(D-ribitylamino)uracil with 3,4-dihydroxy-2-butanone 4-phosphate. This is the penultimate step in the biosynthesis of riboflavin. The sequence is that of 6,7-dimethyl-8-ribityllumazine synthase from Polaromonas sp. (strain JS666 / ATCC BAA-500).